Reading from the N-terminus, the 1002-residue chain is Solute carrier family 12 member 3 (1002 aa).

Residues methionine 1–glycine 135 lie on the Cytoplasmic side of the membrane. Serine 41 carries the post-translational modification Phosphoserine. Phosphothreonine is present on threonine 44. Residue serine 47 is modified to Phosphoserine. Residues threonine 48, threonine 53, and threonine 58 each carry the phosphothreonine modification. Phosphoserine is present on residues serine 71 and serine 89. A Phosphothreonine modification is found at threonine 122. Serine 124 is modified (phosphoserine). Residues tryptophan 136–glycine 165 traverse the membrane as a discontinuously helical segment. Residues leucine 146 and tryptophan 149 each contribute to the Na(+) site. Residues isoleucine 166–isoleucine 187 traverse the membrane as a helical segment. At serine 188–glycine 218 the chain is on the cytoplasmic side. Residues leucine 219–arginine 241 traverse the membrane as a helical segment. Over aspartate 242–aspartate 253 the chain is Extracellular. 2 consecutive transmembrane segments (helical) span residues proline 254 to glutamate 278 and tryptophan 279 to glycine 301. Over threonine 302–glycine 336 the chain is Extracellular. The discontinuously helical transmembrane segment at serine 337–isoleucine 358 threads the bilayer. Glycine 351, isoleucine 352, and leucine 353 together coordinate chloride. Over serine 359–isoleucine 369 the chain is Cytoplasmic. Residues proline 370–isoleucine 391 traverse the membrane as a helical segment. Residues glycine 392 to phenylalanine 451 lie on the Extracellular side of the membrane. Asparagine 404 carries N-linked (GlcNAc...) asparagine glycosylation. A disulfide bridge connects residues cysteine 414 and cysteine 419. N-linked (GlcNAc...) asparagine glycosylation occurs at asparagine 424. A disulfide bond links cysteine 428 and cysteine 434. A helical membrane pass occupies residues alanine 452–alanine 475. Positions 462, 465, and 466 each coordinate Na(+). The Cytoplasmic portion of the chain corresponds to lysine 476–arginine 505. A helical membrane pass occupies residues glycine 506–isoleucine 520. Residues alanine 521–threonine 525 lie on the Extracellular side of the membrane. The chain crosses the membrane as a helical span at residues isoleucine 526–asparagine 542. Chloride is bound at residue tyrosine 538. Residues phenylalanine 543–lysine 565 are Cytoplasmic-facing. The next 2 membrane-spanning stretches (helical) occupy residues tryptophan 566 to tryptophan 585 and alanine 586 to leucine 597. Residues leucine 598–glutamine 1002 lie on the Cytoplasmic side of the membrane. The interval serine 613–glycine 628 is scissor helix. Residues leucine 646, arginine 653, valine 675, glycine 739, leucine 778, and asparagine 779 each contribute to the ATP site.

This sequence belongs to the SLC12A transporter family. In terms of assembly, homodimer; adopts a domain-swap conformation at the scissor helices connecting the transmembrane domain and C-terminal domain. Interacts with KLHL3. Interacts with IL18R1; this interaction is increased by IL18 treatment. In terms of processing, ubiquitinated; ubiquitination is essential for regulation of endocytosis. Post-translationally, phosphorylated at Thr-53, Thr-58 and Ser-71 by OXSR1/OSR1 and STK39/SPAK downstream of WNK4, promoting its activity. Phosphorylated in response to IL18. As to expression, expressed predominantly in kidney, including in distal tubules (at protein level). Detected at low levels in heart, lung and liver. Not detected in normal aorta, but abundantly expressed in fatty streaks and advanced atherosclerotic lesions. In atherosclerotic lesions, expressed in macrophages, smooth muscle cells and endothelial cells (at protein level).

It is found in the cell membrane. Its subcellular location is the apical cell membrane. The catalysed reaction is chloride(out) + Na(+)(out) = chloride(in) + Na(+)(in). With respect to regulation, phosphorylation by OXSR1/OSR1 and STK39/SPAK in kidney distal convoluted tubules promotes its activity. Also activated by OXSR1/OSR1 and STK39/SPAK downstream of WNK3. Inhibited by thiazide-type diuretic metolazone. Thiazide drugs, such as polythiazide, specifically inhibit SLC12A3/NCC transporter activity by competing with chloride for binding. Its function is as follows. Electroneutral sodium and chloride ion cotransporter, which acts as a key mediator of sodium and chloride reabsorption in kidney distal convoluted tubules. Also acts as a receptor for the pro-inflammatory cytokine IL18, thereby contributing to IL18-induced cytokine production, including IFNG, IL6, IL18 and CCL2. May act either independently of IL18R1, or in a complex with IL18R1. The sequence is that of Solute carrier family 12 member 3 from Mus musculus (Mouse).